The primary structure comprises 223 residues: ATP-dependent dethiobiotin synthetase BioD (223 aa).

11 to 16 (DIGKTY) contacts ATP. Position 15 (T15) interacts with Mg(2+). The active site involves K36. T40 provides a ligand contact to substrate. ATP is bound by residues D50, 110–113 (EGAG), and 174–175 (NN). Positions 50 and 110 each coordinate Mg(2+).

The protein belongs to the dethiobiotin synthetase family. In terms of assembly, homodimer. The cofactor is Mg(2+).

The protein localises to the cytoplasm. The enzyme catalyses (7R,8S)-7,8-diammoniononanoate + CO2 + ATP = (4R,5S)-dethiobiotin + ADP + phosphate + 3 H(+). It participates in cofactor biosynthesis; biotin biosynthesis; biotin from 7,8-diaminononanoate: step 1/2. In terms of biological role, catalyzes a mechanistically unusual reaction, the ATP-dependent insertion of CO2 between the N7 and N8 nitrogen atoms of 7,8-diaminopelargonic acid (DAPA, also called 7,8-diammoniononanoate) to form a ureido ring. This is ATP-dependent dethiobiotin synthetase BioD from Staphylococcus epidermidis (strain ATCC 35984 / DSM 28319 / BCRC 17069 / CCUG 31568 / BM 3577 / RP62A).